Reading from the N-terminus, the 427-residue chain is Trigger factor (427 aa).

The PPIase FKBP-type domain maps to 163–248 (GDTVVIDFVG…IHEVKAKEVP (86 aa)).

This sequence belongs to the FKBP-type PPIase family. Tig subfamily.

Its subcellular location is the cytoplasm. The enzyme catalyses [protein]-peptidylproline (omega=180) = [protein]-peptidylproline (omega=0). Functionally, involved in protein export. Acts as a chaperone by maintaining the newly synthesized protein in an open conformation. Functions as a peptidyl-prolyl cis-trans isomerase. In Streptococcus pneumoniae serotype 4 (strain ATCC BAA-334 / TIGR4), this protein is Trigger factor.